The primary structure comprises 137 residues: NADH-quinone oxidoreductase subunit A 1 (137 aa).

Transmembrane regions (helical) follow at residues Phe14 to Leu34, Phe66 to Trp86, and Trp95 to Leu115.

Belongs to the complex I subunit 3 family. In terms of assembly, NDH-1 is composed of 13 different subunits. Subunits NuoA, H, J, K, L, M, N constitute the membrane sector of the complex.

It is found in the cell inner membrane. The enzyme catalyses a quinone + NADH + 5 H(+)(in) = a quinol + NAD(+) + 4 H(+)(out). NDH-1 shuttles electrons from NADH, via FMN and iron-sulfur (Fe-S) centers, to quinones in the respiratory chain. The immediate electron acceptor for the enzyme in this species is believed to be ubiquinone. Couples the redox reaction to proton translocation (for every two electrons transferred, four hydrogen ions are translocated across the cytoplasmic membrane), and thus conserves the redox energy in a proton gradient. The protein is NADH-quinone oxidoreductase subunit A 1 of Pseudomonas paraeruginosa (strain DSM 24068 / PA7) (Pseudomonas aeruginosa (strain PA7)).